Here is a 144-residue protein sequence, read N- to C-terminus: Large ribosomal subunit protein uL13 (144 aa).

This sequence belongs to the universal ribosomal protein uL13 family. Part of the 50S ribosomal subunit.

This protein is one of the early assembly proteins of the 50S ribosomal subunit, although it is not seen to bind rRNA by itself. It is important during the early stages of 50S assembly. The polypeptide is Large ribosomal subunit protein uL13 (Lawsonia intracellularis (strain PHE/MN1-00)).